The primary structure comprises 92 residues: Defensin-like protein 96 (92 aa).

The N-terminal stretch at 1-29 (MGSLRLSTVAIAVVVCLSILLISPTEVDG) is a signal peptide. 4 disulfide bridges follow: cysteine 33–cysteine 80, cysteine 40–cysteine 65, cysteine 49–cysteine 77, and cysteine 53–cysteine 79.

The protein belongs to the DEFL family.

It localises to the secreted. The protein is Defensin-like protein 96 of Arabidopsis thaliana (Mouse-ear cress).